The chain runs to 327 residues: Apoptosis facilitator Bcl-2-like protein 14 (327 aa).

Phosphoserine is present on Ser44. A BH3 motif is present at residues 212–226; sequence IVELLKYSGDQLERK. Positions 308–315 match the BH2 motif; sequence WIQQHGGW.

Belongs to the Bcl-2 family. Post-translationally, phosphorylated by MELK, leading to inhibit its pro-apoptotic function. As to expression, isoform 1 is widely expressed. Isoform 2 is testis-specific.

The protein resides in the cytoplasm. It is found in the cytosol. The protein localises to the endomembrane system. In terms of biological role, plays a role in apoptosis. The protein is Apoptosis facilitator Bcl-2-like protein 14 (BCL2L14) of Homo sapiens (Human).